We begin with the raw amino-acid sequence, 410 residues long: Phosphopentomutase (410 aa).

Asp-10, Asp-309, His-314, Asp-350, His-351, and His-362 together coordinate Mn(2+).

The protein belongs to the phosphopentomutase family. Mn(2+) serves as cofactor.

It is found in the cytoplasm. It carries out the reaction 2-deoxy-alpha-D-ribose 1-phosphate = 2-deoxy-D-ribose 5-phosphate. The enzyme catalyses alpha-D-ribose 1-phosphate = D-ribose 5-phosphate. Its pathway is carbohydrate degradation; 2-deoxy-D-ribose 1-phosphate degradation; D-glyceraldehyde 3-phosphate and acetaldehyde from 2-deoxy-alpha-D-ribose 1-phosphate: step 1/2. Isomerase that catalyzes the conversion of deoxy-ribose 1-phosphate (dRib-1-P) and ribose 1-phosphate (Rib-1-P) to deoxy-ribose 5-phosphate (dRib-5-P) and ribose 5-phosphate (Rib-5-P), respectively. This chain is Phosphopentomutase, found in Aliivibrio fischeri (strain ATCC 700601 / ES114) (Vibrio fischeri).